The chain runs to 240 residues: UDP-2,3-diacylglucosamine hydrolase (240 aa).

Residues Asp8, His10, Asp41, Asn79, and His114 each contribute to the Mn(2+) site. Asn79 to Arg80 lines the substrate pocket. Substrate-binding residues include Asp122, Ser160, Asn164, Lys167, and His195. Mn(2+) contacts are provided by His195 and His197.

The protein belongs to the LpxH family. The cofactor is Mn(2+).

Its subcellular location is the cell inner membrane. It carries out the reaction UDP-2-N,3-O-bis[(3R)-3-hydroxytetradecanoyl]-alpha-D-glucosamine + H2O = 2-N,3-O-bis[(3R)-3-hydroxytetradecanoyl]-alpha-D-glucosaminyl 1-phosphate + UMP + 2 H(+). It functions in the pathway glycolipid biosynthesis; lipid IV(A) biosynthesis; lipid IV(A) from (3R)-3-hydroxytetradecanoyl-[acyl-carrier-protein] and UDP-N-acetyl-alpha-D-glucosamine: step 4/6. Hydrolyzes the pyrophosphate bond of UDP-2,3-diacylglucosamine to yield 2,3-diacylglucosamine 1-phosphate (lipid X) and UMP by catalyzing the attack of water at the alpha-P atom. Involved in the biosynthesis of lipid A, a phosphorylated glycolipid that anchors the lipopolysaccharide to the outer membrane of the cell. The chain is UDP-2,3-diacylglucosamine hydrolase from Yersinia pseudotuberculosis serotype O:1b (strain IP 31758).